The chain runs to 498 residues: MASQGTKRSYEQMETDGERQNANEIRASVGKMIGGIGRFYIQMCTELKLSDYEGRLIQNSLTIERMVLSAFDERRNKYLEEHPSAGKDPKKTGGPIYKRVDGKWMRELVLYDKEEIRRIWRQANNGDDATAGLTHMMIWHSNLNDTTYQRTRALVRTGMDPRMCSLMQGSTLPRRSGAAGAAVKGVGTMVMELIRMIKRGINDRNFWRGENGRKTRNAYERMCNILKGKFQTAAQRAMMDQVRESRNPGNAEIEDLIFLARSALILRGSVAHKSCLPACVYGPAVASGYDFEKEGYSLVGIDPFKLLQNSQVYSLIRPNENPAHKSQLVWMACNSAAFEDLRVSSFIRGTKVIPRGKLSTRGVQIASNENMDTMGSSTLELRSRYWAIRTRSGGNTNQQRASAGQISVQPTFSVQRNLPFDKPTIMAAFTGNAEGRTSDMRAEIIRMMEGAKPEEVSFQGRGVFELSDEKATNPIVPSFDMSNEGSYFFGDNAEEYDN.

The Unconventional nuclear localization signal motif lies at 1 to 18 (MASQGTKRSYEQMETDGE). Residues 1–22 (MASQGTKRSYEQMETDGERQNA) are disordered. Over residues 8–21 (RSYEQMETDGERQN) the composition is skewed to basic and acidic residues. The short motif at 198–216 (KRGINDRNFWRGENGRKTR) is the Bipartite nuclear localization signal element.

It belongs to the influenza viruses nucleoprotein family. In terms of assembly, homomultimerizes to form the nucleocapsid. May bind host exportin-1/XPO1. Binds to viral genomic RNA. Protein-RNA contacts are mediated by a combination of electrostatic interactions between positively charged residues and the phosphate backbone and planar interactions between aromatic side chains and bases. In terms of processing, late in virus-infected cells, may be cleaved from a 56-kDa protein to a 53-kDa protein by a cellular caspase. This cleavage might be a marker for the onset of apoptosis in infected cells or have a specific function in virus host interaction.

It localises to the virion. The protein resides in the host nucleus. Encapsidates the negative strand viral RNA, protecting it from nucleases. The encapsidated genomic RNA is termed the ribonucleoprotein (RNP) and serves as template for transcription and replication. The RNP needs to be localized in the host nucleus to start an infectious cycle, but is too large to diffuse through the nuclear pore complex. NP comprises at least 2 nuclear localization signals that are responsible for the active RNP import into the nucleus through cellular importin alpha/beta pathway. Later in the infection, nclear export of RNPs are mediated through viral proteins NEP interacting with M1 which binds nucleoproteins. It is possible that nucleoprotein binds directly host exportin-1/XPO1 and plays an active role in RNPs nuclear export. M1 interaction with RNP seems to hide nucleoprotein's nuclear localization signals. Soon after a virion infects a new cell, M1 dissociates from the RNP under acidification of the virion driven by M2 protein. Dissociation of M1 from RNP unmasks nucleoprotein's nuclear localization signals, targeting the RNP to the nucleus. In Influenza A virus (strain A/Ann Arbor/6/1960 H2N2), this protein is Nucleoprotein.